A 384-amino-acid polypeptide reads, in one-letter code: Iron(3+)-hydroxamate import system permease protein FhuB (384 aa).

9 helical membrane-spanning segments follow: residues 58-78 (GAVI…FLSI), 115-135 (TAAA…MQGM), 154-174 (FAVS…LVLW), 176-196 (FAGA…SRGG), 202-222 (LALA…AIAI), 243-263 (WSGV…AFFI), 296-316 (VILT…GLII), 330-350 (WIIP…DIAA), and 357-377 (FETP…FYLA).

Belongs to the binding-protein-dependent transport system permease family. FecCD subfamily. The complex is composed of an ATP-binding protein (FhuC), two transmembrane proteins (FhuB and FhuG) and a solute-binding protein (FhuD or YxeB).

It is found in the cell membrane. The protein resides in the membrane raft. In terms of biological role, part of the ABC transporter complex FhuBGCD involved in iron(3+)-hydroxamate import. Responsible for the translocation of the substrate across the membrane. In Bacillus subtilis (strain 168), this protein is Iron(3+)-hydroxamate import system permease protein FhuB (fhuB).